We begin with the raw amino-acid sequence, 128 residues long: Small ribosomal subunit protein uS8c (128 aa).

It belongs to the universal ribosomal protein uS8 family. Part of the 30S ribosomal subunit.

The protein resides in the plastid. Its subcellular location is the chloroplast. One of the primary rRNA binding proteins, it binds directly to 16S rRNA central domain where it helps coordinate assembly of the platform of the 30S subunit. The polypeptide is Small ribosomal subunit protein uS8c (rps8) (Welwitschia mirabilis (Tree tumbo)).